We begin with the raw amino-acid sequence, 376 residues long: Glutamate 5-kinase (376 aa).

Lysine 15 provides a ligand contact to ATP. Positions 56, 143, and 155 each coordinate substrate. Position 175-176 (175-176) interacts with ATP; sequence SD. The region spanning 281–358 is the PUA domain; sequence KGTLTIDAGA…PDVMMILGIT (78 aa).

It belongs to the glutamate 5-kinase family.

Its subcellular location is the cytoplasm. The catalysed reaction is L-glutamate + ATP = L-glutamyl 5-phosphate + ADP. The protein operates within amino-acid biosynthesis; L-proline biosynthesis; L-glutamate 5-semialdehyde from L-glutamate: step 1/2. Catalyzes the transfer of a phosphate group to glutamate to form L-glutamate 5-phosphate. The polypeptide is Glutamate 5-kinase (Rhodopseudomonas palustris (strain TIE-1)).